Here is a 522-residue protein sequence, read N- to C-terminus: Glucose-6-phosphate 1-dehydrogenase (522 aa).

NADP(+)-binding positions include 40-47, Arg74, and Lys177; that span reads GASGDLAK. D-glucose 6-phosphate is bound by residues Lys177, 207-211, Glu245, and Asp264; that span reads HYLGK. The active-site Proton acceptor is His269. Arg364 is an NADP(+) binding site. D-glucose 6-phosphate contacts are provided by Lys367 and Lys372. 3 residues coordinate NADP(+): Lys373, Arg377, and Arg401. Gln403 is a D-glucose 6-phosphate binding site. Residues 409-411, 429-431, Arg495, and Trp517 contribute to the NADP(+) site; these read YMK and DLT.

The protein belongs to the glucose-6-phosphate dehydrogenase family.

It is found in the cytoplasm. It localises to the cytosol. The enzyme catalyses D-glucose 6-phosphate + NADP(+) = 6-phospho-D-glucono-1,5-lactone + NADPH + H(+). Its pathway is carbohydrate degradation; pentose phosphate pathway; D-ribulose 5-phosphate from D-glucose 6-phosphate (oxidative stage): step 1/3. Its function is as follows. Cytosolic glucose-6-phosphate dehydrogenase that catalyzes the first and rate-limiting step of the oxidative branch within the pentose phosphate pathway/shunt, an alternative route to glycolysis for the dissimilation of carbohydrates and a major source of reducing power and metabolic intermediates for fatty acid and nucleic acid biosynthetic processes. This chain is Glucose-6-phosphate 1-dehydrogenase (gspd-1), found in Caenorhabditis elegans.